Consider the following 239-residue polypeptide: Ribonuclease PH (239 aa).

Phosphate contacts are provided by residues R86 and G124–R126.

This sequence belongs to the RNase PH family. Homohexameric ring arranged as a trimer of dimers.

It catalyses the reaction tRNA(n+1) + phosphate = tRNA(n) + a ribonucleoside 5'-diphosphate. Functionally, phosphorolytic 3'-5' exoribonuclease that plays an important role in tRNA 3'-end maturation. Removes nucleotide residues following the 3'-CCA terminus of tRNAs; can also add nucleotides to the ends of RNA molecules by using nucleoside diphosphates as substrates, but this may not be physiologically important. Probably plays a role in initiation of 16S rRNA degradation (leading to ribosome degradation) during starvation. In Psychromonas ingrahamii (strain DSM 17664 / CCUG 51855 / 37), this protein is Ribonuclease PH.